We begin with the raw amino-acid sequence, 865 residues long: Cadherin-related family member 1 (865 aa).

Positions 1-23 (MKHVRHFIPSLFLSLVHVCLVQA) are cleaved as a signal peptide. Residues 24 to 705 (NYAPYFFDNG…TKDNPMKALG (682 aa)) are Extracellular-facing. Cadherin domains follow at residues 38–137 (NGNM…SPEF), 138–249 (INTP…PPMF), 250–356 (IGTP…PPTF), 362–475 (PQNR…VPKF), 476–579 (SSDY…SPEF), and 571–690 (DVND…GPMA). The chain crosses the membrane as a helical span at residues 706–726 (VLAGVMGIMVLITIMISTAMF). Residues 727–865 (WRNKRSNKIM…RNASMGEPHI (139 aa)) are Cytoplasmic-facing. A disordered region spans residues 782 to 810 (ENSNNNVQAAPVPPAAPLPPPPPALAASG). Over residues 792–805 (PVPPAAPLPPPPPA) the composition is skewed to pro residues.

Its subcellular location is the membrane. Functionally, potential calcium-dependent cell-adhesion protein. In Gallus gallus (Chicken), this protein is Cadherin-related family member 1 (CDHR1).